The chain runs to 355 residues: Lipoyl synthase (355 aa).

The RPE1 insert domain maps to 7 to 55; sequence HLSKFAYREEFAGNTEVLATAAYKEDCADASTGLTPKLPLEVEFGKMSK. [4Fe-4S] cluster is bound by residues Cys86, Cys91, Cys97, Cys112, Cys116, Cys119, and Ser325. Residues 98–314 enclose the Radical SAM core domain; the sequence is WSKKHATVMI…ERVARTKGFL (217 aa).

This sequence belongs to the radical SAM superfamily. Lipoyl synthase family. [4Fe-4S] cluster is required as a cofactor.

It localises to the cytoplasm. It carries out the reaction [[Fe-S] cluster scaffold protein carrying a second [4Fe-4S](2+) cluster] + N(6)-octanoyl-L-lysyl-[protein] + 2 oxidized [2Fe-2S]-[ferredoxin] + 2 S-adenosyl-L-methionine + 4 H(+) = [[Fe-S] cluster scaffold protein] + N(6)-[(R)-dihydrolipoyl]-L-lysyl-[protein] + 4 Fe(3+) + 2 hydrogen sulfide + 2 5'-deoxyadenosine + 2 L-methionine + 2 reduced [2Fe-2S]-[ferredoxin]. The protein operates within protein modification; protein lipoylation via endogenous pathway; protein N(6)-(lipoyl)lysine from octanoyl-[acyl-carrier-protein]: step 2/2. Its function is as follows. Catalyzes the radical-mediated insertion of two sulfur atoms into the C-6 and C-8 positions of the octanoyl moiety bound to the lipoyl domains of lipoate-dependent enzymes, thereby converting the octanoylated domains into lipoylated derivatives. This is Lipoyl synthase from Rickettsia bellii (strain RML369-C).